Reading from the N-terminus, the 680-residue chain is DNA-directed RNA polymerase subunit beta' (680 aa).

The Zn(2+) site is built by C69, C71, C87, and C90. D489, D491, and D493 together coordinate Mg(2+).

This sequence belongs to the RNA polymerase beta' chain family. RpoC1 subfamily. In terms of assembly, in plastids the minimal PEP RNA polymerase catalytic core is composed of four subunits: alpha, beta, beta', and beta''. When a (nuclear-encoded) sigma factor is associated with the core the holoenzyme is formed, which can initiate transcription. The cofactor is Mg(2+). Requires Zn(2+) as cofactor.

The protein resides in the plastid. It is found in the chloroplast. It carries out the reaction RNA(n) + a ribonucleoside 5'-triphosphate = RNA(n+1) + diphosphate. Functionally, DNA-dependent RNA polymerase catalyzes the transcription of DNA into RNA using the four ribonucleoside triphosphates as substrates. This is DNA-directed RNA polymerase subunit beta' from Capsella bursa-pastoris (Shepherd's purse).